The primary structure comprises 883 residues: Phosphoenolpyruvate carboxylase (883 aa).

Residues His138 and Lys546 contribute to the active site.

This sequence belongs to the PEPCase type 1 family. The cofactor is Mg(2+).

It carries out the reaction oxaloacetate + phosphate = phosphoenolpyruvate + hydrogencarbonate. Its function is as follows. Forms oxaloacetate, a four-carbon dicarboxylic acid source for the tricarboxylic acid cycle. The sequence is that of Phosphoenolpyruvate carboxylase from Shigella flexneri.